The chain runs to 363 residues: MTVTGIIAEFNPFHNGHKYLLDHAEGIKIVAMSGNFVQRGEPAIVDKWIRAQMALENGADLVVELPFFTAVQSADYFASGAVDILSRLGIDSLTFGTEEVLDYQTIADVYSEKSEEMEAFVESLPSDLSYPQKTQKMWEKFAGVDFTGNTPNHILGLAYAKACAGKGITLNPIQRQGAGYHSLDKEVSFASATSLRLHKEDSNFVDKFMPNSKLFQTSPQVSWDNYFQLLVYQILTNPDLTSVFQVNEEIASRLKAAVREISSVEELVDKVATKRYTKARVRRILTYILVGAVDNSLPKSIHVLGFSQKGQFHLKSVKKSVDIVARIGRKPWDMLTQQADNVYQLGNPELCEQNFGRVPIRVK.

ATP contacts are provided by residues 7–20, G96, N152, and R175; that span reads IAEFNPFHNGHKYL.

The protein belongs to the TmcAL family.

The protein resides in the cytoplasm. The catalysed reaction is cytidine(34) in elongator tRNA(Met) + acetate + ATP = N(4)-acetylcytidine(34) in elongator tRNA(Met) + AMP + diphosphate. Functionally, catalyzes the formation of N(4)-acetylcytidine (ac(4)C) at the wobble position of elongator tRNA(Met), using acetate and ATP as substrates. First activates an acetate ion to form acetyladenylate (Ac-AMP) and then transfers the acetyl group to tRNA to form ac(4)C34. This Streptococcus thermophilus (strain ATCC BAA-250 / LMG 18311) protein is tRNA(Met) cytidine acetate ligase.